The following is an 831-amino-acid chain: MIPLDPAQRAAELRRRLQEANYHYHVLDQPRIPDADYDRMLRELDALEATYPDLATPDSPTQRVGHTIATAFSEVRHTVPMLSLNNAFSDPEVLEFVRRITARLGETAPGFSAEPKLDGLAISLRYQNGIFIQGATRGDGVTGEDVTANLRTLPTIPQRLQSDTWPTVLEVRGEVYMPRPDFEAYNTQARLRGWKVLANPRNGAAGSLRQLDPHITAQRPLSFYAYGIGEVTDDVAFHRHSEILASLRAWGFPVSPLVELVYGSEGLLNYYRRMETIRDTLPFDIDGIVYKLDDLSGQHEMGFVARAPRWAIAHKFPAQEQTTTVEAIEIQIGRTGAATPVARLTPVQVAGVTVTSVTLHNADQIARLDVRIGDTVIVRRAGDVIPEVVAVITDSRPPGATAWSMPMACPVCGSEIVRETGAAVWRCSGELACPAQRKEAIRHFVSRRAMDVEGLGVKCIELLVDAAVVHGVADLYHLSLDQLLRLRLVTNAQTPTMLLREARDHVTGMRYQQLEEILRTVGVDLSGEGDVPKHWQIDVLRAQWPDFDWNHKKIATKWAQNLIAAIDRSRQTTLERFLFALGMTHVGETTAKALAHSFGDLAIIRQLPWPLFKCVPDIGGEVARAIGHFMDQPANQQAIDDLVERGVRITDAHPPTSTLRDQLTLASLLEHLEIPKITPLRAVQLATLAPTLPLLAEADLDALLQAGVPQPAAQSLTEWFQSPDNISLARRLQHCCDVLLAQLLSPDRAHTAPLNGQSVVLTGKLASLTREAAATRLESLGAKIVGSVSKKTSFLVAGEDPGSKLDKAHALHVDIWDEARLLAFLEQYSAQ.

Residues 34–38 (DADYD), 83–84 (SL), and E114 each bind NAD(+). Residue K116 is the N6-AMP-lysine intermediate of the active site. The NAD(+) site is built by R137, E174, K291, and K315. Residues C409, C412, C427, and C433 each contribute to the Zn(2+) site. A BRCT domain is found at 749 to 831 (AHTAPLNGQS…LAFLEQYSAQ (83 aa)).

It belongs to the NAD-dependent DNA ligase family. LigA subfamily. Mg(2+) serves as cofactor. Requires Mn(2+) as cofactor.

The catalysed reaction is NAD(+) + (deoxyribonucleotide)n-3'-hydroxyl + 5'-phospho-(deoxyribonucleotide)m = (deoxyribonucleotide)n+m + AMP + beta-nicotinamide D-nucleotide.. In terms of biological role, DNA ligase that catalyzes the formation of phosphodiester linkages between 5'-phosphoryl and 3'-hydroxyl groups in double-stranded DNA using NAD as a coenzyme and as the energy source for the reaction. It is essential for DNA replication and repair of damaged DNA. This Xylella fastidiosa (strain M23) protein is DNA ligase.